We begin with the raw amino-acid sequence, 229 residues long: Prolactin (229 aa).

An N-terminal signal peptide occupies residues 1 to 30 (MSNRGASLKGLFLAVLLVSNTLLTKEGVTS). Cystine bridges form between cysteine 34/cysteine 41, cysteine 88/cysteine 204, and cysteine 221/cysteine 229.

The protein belongs to the somatotropin/prolactin family.

The protein resides in the secreted. The sequence is that of Prolactin (PRL) from Gallus gallus (Chicken).